The following is a 442-amino-acid chain: Histidine--tRNA ligase (442 aa).

Belongs to the class-II aminoacyl-tRNA synthetase family. Homodimer.

The protein localises to the cytoplasm. The catalysed reaction is tRNA(His) + L-histidine + ATP = L-histidyl-tRNA(His) + AMP + diphosphate + H(+). The polypeptide is Histidine--tRNA ligase (hisS) (Treponema pallidum (strain Nichols)).